Reading from the N-terminus, the 285-residue chain is Eukaryotic translation initiation factor 3 subunit J (285 aa).

Disordered stretches follow at residues 1–86 (MSWD…QLDE) and 232–285 (QARL…DDFM). Positions 22–41 (WEDEEDDGPVLESWDVDPEE) are enriched in acidic residues. Residues 36–81 (DVDPEEEEKKKKEAKLQEAKRKAELKAKEDAEKAKKDAKRKELEQF) are a coiled coil. Residues 42–86 (EEKKKKEAKLQEAKRKAELKAKEDAEKAKKDAKRKELEQFDQLDE) show a composition bias toward basic and acidic residues. A compositionally biased stretch (acidic residues) spans 269 to 285 (DDMDDGQFDDLDDDDFM).

Belongs to the eIF-3 subunit J family. As to quaternary structure, component of the eukaryotic translation initiation factor 3 (eIF-3) complex.

It localises to the cytoplasm. Its function is as follows. Component of the eukaryotic translation initiation factor 3 (eIF-3) complex, which is involved in protein synthesis of a specialized repertoire of mRNAs and, together with other initiation factors, stimulates binding of mRNA and methionyl-tRNAi to the 40S ribosome. The eIF-3 complex specifically targets and initiates translation of a subset of mRNAs involved in cell proliferation. This is Eukaryotic translation initiation factor 3 subunit J from Candida albicans (strain SC5314 / ATCC MYA-2876) (Yeast).